A 362-amino-acid polypeptide reads, in one-letter code: Phosphoserine aminotransferase (362 aa).

Positions 9 and 42 each coordinate L-glutamate. Pyridoxal 5'-phosphate-binding positions include 76–77 (GR), W102, T153, D174, and Q197. Position 198 is an N6-(pyridoxal phosphate)lysine (K198). 239 to 240 (NT) provides a ligand contact to pyridoxal 5'-phosphate.

This sequence belongs to the class-V pyridoxal-phosphate-dependent aminotransferase family. SerC subfamily. As to quaternary structure, homodimer. Pyridoxal 5'-phosphate is required as a cofactor.

It is found in the cytoplasm. The enzyme catalyses O-phospho-L-serine + 2-oxoglutarate = 3-phosphooxypyruvate + L-glutamate. The catalysed reaction is 4-(phosphooxy)-L-threonine + 2-oxoglutarate = (R)-3-hydroxy-2-oxo-4-phosphooxybutanoate + L-glutamate. Its pathway is amino-acid biosynthesis; L-serine biosynthesis; L-serine from 3-phospho-D-glycerate: step 2/3. It participates in cofactor biosynthesis; pyridoxine 5'-phosphate biosynthesis; pyridoxine 5'-phosphate from D-erythrose 4-phosphate: step 3/5. Its function is as follows. Catalyzes the reversible conversion of 3-phosphohydroxypyruvate to phosphoserine and of 3-hydroxy-2-oxo-4-phosphonooxybutanoate to phosphohydroxythreonine. The sequence is that of Phosphoserine aminotransferase from Escherichia coli (strain ATCC 8739 / DSM 1576 / NBRC 3972 / NCIMB 8545 / WDCM 00012 / Crooks).